We begin with the raw amino-acid sequence, 461 residues long: ATP synthase subunit beta (461 aa).

Position 151-158 (151-158 (GGAGVGKT)) interacts with ATP.

This sequence belongs to the ATPase alpha/beta chains family. F-type ATPases have 2 components, CF(1) - the catalytic core - and CF(0) - the membrane proton channel. CF(1) has five subunits: alpha(3), beta(3), gamma(1), delta(1), epsilon(1). CF(0) has three main subunits: a(1), b(2) and c(9-12). The alpha and beta chains form an alternating ring which encloses part of the gamma chain. CF(1) is attached to CF(0) by a central stalk formed by the gamma and epsilon chains, while a peripheral stalk is formed by the delta and b chains.

The protein resides in the cell inner membrane. It carries out the reaction ATP + H2O + 4 H(+)(in) = ADP + phosphate + 5 H(+)(out). Functionally, produces ATP from ADP in the presence of a proton gradient across the membrane. The catalytic sites are hosted primarily by the beta subunits. The protein is ATP synthase subunit beta of Alteromonas mediterranea (strain DSM 17117 / CIP 110805 / LMG 28347 / Deep ecotype).